We begin with the raw amino-acid sequence, 263 residues long: Purine nucleoside phosphorylase SAV1187 (263 aa).

The Zn(2+) site is built by His-79, Cys-124, and His-141.

The protein belongs to the purine nucleoside phosphorylase YfiH/LACC1 family. As to quaternary structure, homodimer. Requires Cu(2+) as cofactor. The cofactor is Zn(2+).

The catalysed reaction is adenosine + phosphate = alpha-D-ribose 1-phosphate + adenine. It carries out the reaction S-methyl-5'-thioadenosine + phosphate = 5-(methylsulfanyl)-alpha-D-ribose 1-phosphate + adenine. It catalyses the reaction inosine + phosphate = alpha-D-ribose 1-phosphate + hypoxanthine. The enzyme catalyses adenosine + H2O + H(+) = inosine + NH4(+). Its function is as follows. Purine nucleoside enzyme that catalyzes the phosphorolysis of adenosine and inosine nucleosides, yielding D-ribose 1-phosphate and the respective free bases, adenine and hypoxanthine. Also catalyzes the phosphorolysis of S-methyl-5'-thioadenosine into adenine and S-methyl-5-thio-alpha-D-ribose 1-phosphate. Also has adenosine deaminase activity. This is Purine nucleoside phosphorylase SAV1187 from Staphylococcus aureus (strain Mu50 / ATCC 700699).